Consider the following 400-residue polypeptide: ATP phosphoribosyltransferase regulatory subunit (400 aa).

This sequence belongs to the class-II aminoacyl-tRNA synthetase family. HisZ subfamily. In terms of assembly, heteromultimer composed of HisG and HisZ subunits.

It is found in the cytoplasm. The protein operates within amino-acid biosynthesis; L-histidine biosynthesis; L-histidine from 5-phospho-alpha-D-ribose 1-diphosphate: step 1/9. Functionally, required for the first step of histidine biosynthesis. May allow the feedback regulation of ATP phosphoribosyltransferase activity by histidine. This Hahella chejuensis (strain KCTC 2396) protein is ATP phosphoribosyltransferase regulatory subunit.